Reading from the N-terminus, the 62-residue chain is Large ribosomal subunit protein bL28 (62 aa).

Belongs to the bacterial ribosomal protein bL28 family.

In Aster yellows witches'-broom phytoplasma (strain AYWB), this protein is Large ribosomal subunit protein bL28.